We begin with the raw amino-acid sequence, 364 residues long: Biotin synthase (364 aa).

Residues 14 to 36 form a disordered region; that stretch reads DTIPPGTETPYASPSHARTEEAP. The Radical SAM core domain maps to 70-308; the sequence is RKGPLATTCG…QRDILVCGGR (239 aa). [4Fe-4S] cluster contacts are provided by C88, C92, and C95. Positions 164 and 233 each coordinate [2Fe-2S] cluster.

This sequence belongs to the radical SAM superfamily. Biotin synthase family. As to quaternary structure, homodimer. The cofactor is [4Fe-4S] cluster. [2Fe-2S] cluster serves as cofactor.

The catalysed reaction is (4R,5S)-dethiobiotin + (sulfur carrier)-SH + 2 reduced [2Fe-2S]-[ferredoxin] + 2 S-adenosyl-L-methionine = (sulfur carrier)-H + biotin + 2 5'-deoxyadenosine + 2 L-methionine + 2 oxidized [2Fe-2S]-[ferredoxin]. The protein operates within cofactor biosynthesis; biotin biosynthesis; biotin from 7,8-diaminononanoate: step 2/2. Catalyzes the conversion of dethiobiotin (DTB) to biotin by the insertion of a sulfur atom into dethiobiotin via a radical-based mechanism. This chain is Biotin synthase, found in Nitratidesulfovibrio vulgaris (strain DSM 19637 / Miyazaki F) (Desulfovibrio vulgaris).